Reading from the N-terminus, the 476-residue chain is Calcium/calmodulin-dependent protein kinase type 1G (476 aa).

The region spanning 23 to 277 is the Protein kinase domain; the sequence is FIFMEVLGSG…CEKALSHPWI (255 aa). Residues 29–37 and Lys-52 each bind ATP; that span reads LGSGAFSEV. Asp-143 functions as the Proton acceptor in the catalytic mechanism. An autoinhibitory domain region spans residues 277–317; sequence IDGNTALHRDIYPSVSLQIQKNFAKSKWRQAFNAAAVVHHM. A calmodulin-binding region spans residues 297–318; that stretch reads KNFAKSKWRQAFNAAAVVHHMR. Residues 325–352 form a disordered region; sequence HSPGVRPEVENRPPETQASETSRPSSPE. The span at 338 to 352 shows a compositional bias: polar residues; that stretch reads PETQASETSRPSSPE.

Belongs to the protein kinase superfamily. CAMK Ser/Thr protein kinase family. CaMK subfamily. May be prenylated on Cys-473. As to expression, mainly expressed in brain with small amounts in skeletal muscles, kidney, spleen and liver. Strongly expressed in forebrain neocortex, striatum and limbic system.

Its subcellular location is the cytoplasm. It is found in the golgi apparatus membrane. It localises to the cell membrane. The catalysed reaction is L-seryl-[protein] + ATP = O-phospho-L-seryl-[protein] + ADP + H(+). It carries out the reaction L-threonyl-[protein] + ATP = O-phospho-L-threonyl-[protein] + ADP + H(+). Its activity is regulated as follows. Activated by Ca(2+)/calmodulin. Binding of calmodulin is thought to result in a conformational change and leads to activation through phosphorylation by CAMKK1. In terms of biological role, calcium/calmodulin-dependent protein kinase belonging to a proposed calcium-triggered signaling cascade. In vitro phosphorylates transcription factor CREB1. In Homo sapiens (Human), this protein is Calcium/calmodulin-dependent protein kinase type 1G (CAMK1G).